The sequence spans 176 residues: NAD(P)H-quinone oxidoreductase subunit 6, chloroplastic (176 aa).

The next 5 helical transmembrane spans lie at Phe10–Thr30, Thr32–Leu52, Leu63–Gly83, Val92–Ile112, and Phe152–Phe172.

This sequence belongs to the complex I subunit 6 family. In terms of assembly, NDH is composed of at least 16 different subunits, 5 of which are encoded in the nucleus.

It is found in the plastid. The protein resides in the chloroplast thylakoid membrane. It catalyses the reaction a plastoquinone + NADH + (n+1) H(+)(in) = a plastoquinol + NAD(+) + n H(+)(out). The enzyme catalyses a plastoquinone + NADPH + (n+1) H(+)(in) = a plastoquinol + NADP(+) + n H(+)(out). NDH shuttles electrons from NAD(P)H:plastoquinone, via FMN and iron-sulfur (Fe-S) centers, to quinones in the photosynthetic chain and possibly in a chloroplast respiratory chain. The immediate electron acceptor for the enzyme in this species is believed to be plastoquinone. Couples the redox reaction to proton translocation, and thus conserves the redox energy in a proton gradient. The chain is NAD(P)H-quinone oxidoreductase subunit 6, chloroplastic (ndhG) from Phaseolus vulgaris (Kidney bean).